A 202-amino-acid polypeptide reads, in one-letter code: Probable WRKY transcription factor 59 (202 aa).

The segment at residues 103–168 is a DNA-binding region (WRKY); the sequence is DEKVALDDGY…YEGRHNHPSP (66 aa).

The protein belongs to the WRKY group II-c family.

The protein localises to the nucleus. Functionally, transcription factor. Interacts specifically with the W box (5'-(T)TGAC[CT]-3'), a frequently occurring elicitor-responsive cis-acting element. This Arabidopsis thaliana (Mouse-ear cress) protein is Probable WRKY transcription factor 59 (WRKY59).